The following is a 1047-amino-acid chain: Suppression of tumorigenicity 18 protein (1047 aa).

3 disordered regions span residues 41–92, 168–221, and 251–286; these read TAED…HSTA, FLIH…VPKY, and DSET…SESL. Residues 52 to 65 show a composition bias toward basic residues; it reads NKRKSLLMKPRHYS. Residues 171–181 show a composition bias toward basic and acidic residues; sequence HSDDGRDKIDD. CCHHC-type zinc fingers lie at residues 359–402 and 403–446; these read PRPE…PLEI and LAMH…KLAM. The Zn(2+) site is built by Cys-368, Cys-373, His-386, Cys-392, Cys-412, Cys-417, His-430, and Cys-436. Disordered stretches follow at residues 523 to 563 and 672 to 710; these read GRKT…SYSY and YSKT…SPKP. Over residues 550-563 the composition is skewed to polar residues; the sequence is AHTQSPGRASSYSY. Basic and acidic residues predominate over residues 677–687; it reads GKTEEEKEKDP. 4 consecutive CCHHC-type zinc fingers follow at residues 715–758, 759–802, 807–850, and 860–903; these read RDLK…LKSL, MAAN…GVKM, EEKE…QKEN, and KLNK…IKKG. Cys-724, Cys-729, His-742, Cys-748, Cys-768, Cys-773, His-786, Cys-792, Cys-816, Cys-821, His-834, Cys-840, Cys-869, Cys-874, His-887, and Cys-893 together coordinate Zn(2+). A coiled-coil region spans residues 920–992; that stretch reads IESDEEIRHL…AGLSQALISS (73 aa).

Belongs to the MYT1 family. Detected at low levels in heart, liver, kidney, skeletal muscle, pancreas, testis, ovary and prostate. Detected at even lower levels in mammary epithelial cells and breast cancer cells.

It is found in the nucleus. Functionally, repressor that binds to DNA sequences containing a bipartite element consisting of a direct repeat of the sequence 5'-AAAGTTT-3' separated by 2-9 nucleotides. Represses basal transcription activity from target promoters. Inhibits colony formation in cultured breast cancer cells. The sequence is that of Suppression of tumorigenicity 18 protein (ST18) from Homo sapiens (Human).